The chain runs to 450 residues: Aspartyl/glutamyl-tRNA(Asn/Gln) amidotransferase subunit B (450 aa).

It belongs to the GatB/GatE family. GatB subfamily. As to quaternary structure, heterotrimer of A, B and C subunits.

It carries out the reaction L-glutamyl-tRNA(Gln) + L-glutamine + ATP + H2O = L-glutaminyl-tRNA(Gln) + L-glutamate + ADP + phosphate + H(+). The enzyme catalyses L-aspartyl-tRNA(Asn) + L-glutamine + ATP + H2O = L-asparaginyl-tRNA(Asn) + L-glutamate + ADP + phosphate + 2 H(+). Allows the formation of correctly charged Asn-tRNA(Asn) or Gln-tRNA(Gln) through the transamidation of misacylated Asp-tRNA(Asn) or Glu-tRNA(Gln) in organisms which lack either or both of asparaginyl-tRNA or glutaminyl-tRNA synthetases. The reaction takes place in the presence of glutamine and ATP through an activated phospho-Asp-tRNA(Asn) or phospho-Glu-tRNA(Gln). This Methanobrevibacter smithii (strain ATCC 35061 / DSM 861 / OCM 144 / PS) protein is Aspartyl/glutamyl-tRNA(Asn/Gln) amidotransferase subunit B.